Reading from the N-terminus, the 283-residue chain is Orotidine 5'-phosphate decarboxylase (283 aa).

Residues D40, 62 to 64, 93 to 102, Y220, and R239 contribute to the substrate site; these read KTH and DRKFADIGNT. K95 serves as the catalytic Proton donor.

It belongs to the OMP decarboxylase family.

It catalyses the reaction orotidine 5'-phosphate + H(+) = UMP + CO2. The protein operates within pyrimidine metabolism; UMP biosynthesis via de novo pathway; UMP from orotate: step 2/2. In Mycosarcoma maydis (Corn smut fungus), this protein is Orotidine 5'-phosphate decarboxylase (PYR6).